The primary structure comprises 279 residues: Ribosomal RNA small subunit methyltransferase J (279 aa).

Residues 138–139 (ER) and Asp-194 each bind S-adenosyl-L-methionine.

The protein belongs to the methyltransferase superfamily. RsmJ family.

It localises to the cytoplasm. The enzyme catalyses guanosine(1516) in 16S rRNA + S-adenosyl-L-methionine = N(2)-methylguanosine(1516) in 16S rRNA + S-adenosyl-L-homocysteine + H(+). Specifically methylates the guanosine in position 1516 of 16S rRNA. This is Ribosomal RNA small subunit methyltransferase J from Acinetobacter baumannii (strain AYE).